Here is a 434-residue protein sequence, read N- to C-terminus: UPF0597 protein CLB_1949 (434 aa).

Belongs to the UPF0597 family.

The protein is UPF0597 protein CLB_1949 of Clostridium botulinum (strain ATCC 19397 / Type A).